Here is a 142-residue protein sequence, read N- to C-terminus: Small ribosomal subunit protein uS12 (142 aa).

Belongs to the universal ribosomal protein uS12 family. As to quaternary structure, part of the 30S ribosomal subunit.

With S4 and S5 plays an important role in translational accuracy. Located at the interface of the 30S and 50S subunits. In Thermoplasma volcanium (strain ATCC 51530 / DSM 4299 / JCM 9571 / NBRC 15438 / GSS1), this protein is Small ribosomal subunit protein uS12.